The following is a 324-amino-acid chain: Glyoxylate/hydroxypyruvate reductase B (324 aa).

Catalysis depends on residues Arg237 and Glu266. His285 (proton donor) is an active-site residue.

This sequence belongs to the D-isomer specific 2-hydroxyacid dehydrogenase family. GhrB subfamily. In terms of assembly, homodimer.

The protein localises to the cytoplasm. It catalyses the reaction glycolate + NADP(+) = glyoxylate + NADPH + H(+). The catalysed reaction is (R)-glycerate + NAD(+) = 3-hydroxypyruvate + NADH + H(+). The enzyme catalyses (R)-glycerate + NADP(+) = 3-hydroxypyruvate + NADPH + H(+). Its function is as follows. Catalyzes the NADPH-dependent reduction of glyoxylate and hydroxypyruvate into glycolate and glycerate, respectively. In Salmonella gallinarum (strain 287/91 / NCTC 13346), this protein is Glyoxylate/hydroxypyruvate reductase B.